The sequence spans 357 residues: 3-isopropylmalate dehydrogenase (357 aa).

Residue 76-89 participates in NAD(+) binding; sequence GPQWDTIDPALRPE. Substrate contacts are provided by arginine 96, arginine 106, arginine 134, and aspartate 224. Residues aspartate 224, aspartate 248, and aspartate 252 each contribute to the Mg(2+) site. Position 282–294 (282–294) interacts with NAD(+); the sequence is GSAPDIAGQGIAN.

It belongs to the isocitrate and isopropylmalate dehydrogenases family. LeuB type 1 subfamily. Homodimer. The cofactor is Mg(2+). Mn(2+) serves as cofactor.

It localises to the cytoplasm. The enzyme catalyses (2R,3S)-3-isopropylmalate + NAD(+) = 4-methyl-2-oxopentanoate + CO2 + NADH. It functions in the pathway amino-acid biosynthesis; L-leucine biosynthesis; L-leucine from 3-methyl-2-oxobutanoate: step 3/4. Functionally, catalyzes the oxidation of 3-carboxy-2-hydroxy-4-methylpentanoate (3-isopropylmalate) to 3-carboxy-4-methyl-2-oxopentanoate. The product decarboxylates to 4-methyl-2 oxopentanoate. The polypeptide is 3-isopropylmalate dehydrogenase (Xanthomonas campestris pv. campestris (strain 8004)).